Reading from the N-terminus, the 265-residue chain is Undecaprenyl-diphosphatase (265 aa).

The next 7 helical transmembrane spans lie at 42-62 (ATTFEVAIQLGAILAVVVLYW), 82-102 (GIMLLLLTSLPASVLGLAAHS), 108-128 (LFTPSTVAIALAVGAIFMLLV), 143-163 (MSPALALGIGCFQCLALWPGF), 181-201 (GLAAEYSFIAAVPIMFAATGY), 221-241 (GFVVSFLSAWAAVKLFIALVG), and 248-264 (FAWYRLAIAPLVYYFMA).

Belongs to the UppP family.

The protein resides in the cell inner membrane. It carries out the reaction di-trans,octa-cis-undecaprenyl diphosphate + H2O = di-trans,octa-cis-undecaprenyl phosphate + phosphate + H(+). Catalyzes the dephosphorylation of undecaprenyl diphosphate (UPP). Confers resistance to bacitracin. This chain is Undecaprenyl-diphosphatase, found in Nitratidesulfovibrio vulgaris (strain ATCC 29579 / DSM 644 / CCUG 34227 / NCIMB 8303 / VKM B-1760 / Hildenborough) (Desulfovibrio vulgaris).